The chain runs to 307 residues: tRNA dimethylallyltransferase (307 aa).

9–16 contributes to the ATP binding site; sequence GATGTGKS. 11–16 serves as a coordination point for substrate; it reads TGTGKS.

It belongs to the IPP transferase family. As to quaternary structure, monomer. The cofactor is Mg(2+).

The enzyme catalyses adenosine(37) in tRNA + dimethylallyl diphosphate = N(6)-dimethylallyladenosine(37) in tRNA + diphosphate. In terms of biological role, catalyzes the transfer of a dimethylallyl group onto the adenine at position 37 in tRNAs that read codons beginning with uridine, leading to the formation of N6-(dimethylallyl)adenosine (i(6)A). This chain is tRNA dimethylallyltransferase, found in Clavibacter sepedonicus (Clavibacter michiganensis subsp. sepedonicus).